The sequence spans 310 residues: uncharacterized protein (310 aa).

Disordered stretches follow at residues 22–163 and 178–209; these read LARQ…PVEH and EAEA…VEGD. Composition is skewed to basic and acidic residues over residues 56-66 and 183-197; these read IIRDDHHHAGP and TEVR…ERHA. Low complexity predominate over residues 198-209; that stretch reads AAAAAGTDVEGD. Helical transmembrane passes span 231-251, 257-277, and 286-306; these read ALVV…FIAF, WNSI…VVSV, and IAST…PLAL.

To M.leprae ML2433.

The protein resides in the cell membrane. This is an uncharacterized protein from Mycobacterium tuberculosis (strain CDC 1551 / Oshkosh).